A 357-amino-acid chain; its full sequence is Protein Wnt-5b (357 aa).

An N-terminal signal peptide occupies residues 1–18 (MPGIRLLLAAALLCCPPP). Residues C81 and C92 are joined by a disulfide bond. N91 and N97 each carry an N-linked (GlcNAc...) asparagine glycan. 10 disulfide bridges follow: C131/C139, C141/C159, C215/C229, C217/C224, C286/C317, C302/C312, C316/C356, C332/C347, C334/C344, and C339/C340. S221 is lipidated: O-palmitoleoyl serine; by PORCN. Residues N289 and N303 are each glycosylated (N-linked (GlcNAc...) asparagine).

This sequence belongs to the Wnt family. Post-translationally, palmitoleoylation is required for efficient binding to frizzled receptors. Depalmitoleoylation leads to Wnt signaling pathway inhibition. As to expression, predominantly in neuroectodermal tissues.

It is found in the secreted. The protein resides in the extracellular space. It localises to the extracellular matrix. Ligand for members of the frizzled family of seven transmembrane receptors. Probable developmental protein. May be a signaling molecule which affects the development of discrete regions of tissues. Is likely to signal over only few cell diameters. This chain is Protein Wnt-5b (WNT-5B), found in Ambystoma mexicanum (Axolotl).